The primary structure comprises 193 residues: Adenylate kinase (193 aa).

11–16 (GSGKGT) serves as a coordination point for ATP. The segment at 31–60 (STGDIFRANVKGETPLGLEAKKYMDAGDYV) is NMP. AMP-binding positions include threonine 32, arginine 37, 58–60 (DYV), 86–89 (GYPR), and glutamine 93. Positions 127–137 (GRAKESGRSDD) are LID. Arginine 128 contributes to the ATP binding site. Residues arginine 134 and arginine 145 each coordinate AMP. ATP is bound at residue glycine 173.

The protein belongs to the adenylate kinase family. As to quaternary structure, monomer.

It localises to the cytoplasm. The catalysed reaction is AMP + ATP = 2 ADP. It functions in the pathway purine metabolism; AMP biosynthesis via salvage pathway; AMP from ADP: step 1/1. Catalyzes the reversible transfer of the terminal phosphate group between ATP and AMP. Plays an important role in cellular energy homeostasis and in adenine nucleotide metabolism. This is Adenylate kinase from Renibacterium salmoninarum (strain ATCC 33209 / DSM 20767 / JCM 11484 / NBRC 15589 / NCIMB 2235).